The following is a 1032-amino-acid chain: Argonaute protein hrde-1 (1032 aa).

2 disordered regions span residues 1 to 51 (MADL…PIGR) and 298 to 375 (KLSE…YSPS). The tract at residues 1-551 (MADLLDKIMG…IQMTAKLLPP (551 aa)) is required to recruit the small-RNA amplification machinery to gene targets and promote gene silencing. Basic and acidic residues predominate over residues 18–33 (PKRDNRMNQDKDEPTS). Gly residues predominate over residues 303–313 (KGGGGGRGGYG). Composition is skewed to basic and acidic residues over residues 315 to 335 (SDSR…RDFR) and 343 to 364 (GNDR…RRDS). The PAZ domain maps to 376–481 (DAAELEHAFG…FPMELLRIAP (106 aa)). One can recognise a Piwi domain in the interval 650 to 977 (DILVGIAREK…LAKRGRNNYK (328 aa)).

This sequence belongs to the argonaute family. WAGO subfamily. As to expression, expressed in the nuclei of male and female germ cells.

It is found in the cytoplasm. Its subcellular location is the cytoplasmic ribonucleoprotein granule. It localises to the nucleus. In terms of biological role, argonaute protein which is involved in the endogenous small interfering RNA (endo-siRNA) pathway and is required for RNA-mediated gene silencing (RNAi) in the germline. Interacts with secondary 22G-RNAs in an hrde-2-dependent manner; 22G-RNAs are RNA-dependent RNA polymerase-derived endo-siRNAs, typically 22 nucleotides in length with a 5'-guanosine residue. Plays a key role in transgenerational epigenetic inheritance and germline immortality. May be involved in transgenerational gene silencing both by inducing subnuclear-co-localization of target genes into heterochromatin and by activation of small RNA amplification in the nuage. The chain is Argonaute protein hrde-1 from Caenorhabditis elegans.